A 631-amino-acid chain; its full sequence is Probable electron transfer flavoprotein-ubiquinone oxidoreductase, mitochondrial (631 aa).

Residue 65–79 coordinates FAD; it reads VCIVGGGPAGLATAI. The [4Fe-4S] cluster site is built by cysteine 574, cysteine 600, cysteine 603, and cysteine 606. A 4Fe-4S ferredoxin-type domain is found at 591-620; sequence TRLQINSQNCIHCKTCDIKAPRQDITWKVP.

Belongs to the ETF-QO/FixC family. [4Fe-4S] cluster is required as a cofactor. Requires FAD as cofactor.

It is found in the mitochondrion inner membrane. It catalyses the reaction a ubiquinone + reduced [electron-transfer flavoprotein] = a ubiquinol + oxidized [electron-transfer flavoprotein] + H(+). Functionally, accepts electrons from ETF and reduces ubiquinone. This Saccharomyces cerevisiae (strain ATCC 204508 / S288c) (Baker's yeast) protein is Probable electron transfer flavoprotein-ubiquinone oxidoreductase, mitochondrial (CIR2).